We begin with the raw amino-acid sequence, 337 residues long: tRNA-dihydrouridine synthase B (337 aa).

Residues 19 to 21 (PMA) and glutamine 73 contribute to the FMN site. Cysteine 103 functions as the Proton donor in the catalytic mechanism. Residues lysine 142, 203-205 (NGD), and 227-228 (GR) contribute to the FMN site.

Belongs to the Dus family. DusB subfamily. FMN is required as a cofactor.

It catalyses the reaction a 5,6-dihydrouridine in tRNA + NAD(+) = a uridine in tRNA + NADH + H(+). The enzyme catalyses a 5,6-dihydrouridine in tRNA + NADP(+) = a uridine in tRNA + NADPH + H(+). Its function is as follows. Catalyzes the synthesis of 5,6-dihydrouridine (D), a modified base found in the D-loop of most tRNAs, via the reduction of the C5-C6 double bond in target uridines. The sequence is that of tRNA-dihydrouridine synthase B from Pseudomonas syringae pv. tomato (strain ATCC BAA-871 / DC3000).